A 357-amino-acid chain; its full sequence is Putative ABC transporter ATP-binding protein MG303 (357 aa).

An ABC transporter domain is found at 72 to 312; sequence LFFNNISVFV…TSWLMQYGIT (241 aa). Residue 107-114 participates in ATP binding; that stretch reads GESGSGKT.

Belongs to the ABC transporter superfamily.

In Mycoplasma genitalium (strain ATCC 33530 / DSM 19775 / NCTC 10195 / G37) (Mycoplasmoides genitalium), this protein is Putative ABC transporter ATP-binding protein MG303.